The sequence spans 600 residues: Elongation factor 4 (600 aa).

Residues 4–187 (KYIRNFSIVA…AIIEQIPPPL (184 aa)) enclose the tr-type G domain. Residues 16–21 (DHGKST) and 134–137 (NKID) contribute to the GTP site.

This sequence belongs to the TRAFAC class translation factor GTPase superfamily. Classic translation factor GTPase family. LepA subfamily.

The protein localises to the cell membrane. The catalysed reaction is GTP + H2O = GDP + phosphate + H(+). In terms of biological role, required for accurate and efficient protein synthesis under certain stress conditions. May act as a fidelity factor of the translation reaction, by catalyzing a one-codon backward translocation of tRNAs on improperly translocated ribosomes. Back-translocation proceeds from a post-translocation (POST) complex to a pre-translocation (PRE) complex, thus giving elongation factor G a second chance to translocate the tRNAs correctly. Binds to ribosomes in a GTP-dependent manner. The chain is Elongation factor 4 from Malacoplasma penetrans (strain HF-2) (Mycoplasma penetrans).